The following is an 826-amino-acid chain: Ubiquitin carboxyl-terminal hydrolase 16 (826 aa).

The disordered stretch occupies residues 1–23 (MGKKRTKGKSVPEKASSESTEPM). Residues 22 to 141 (PMCRHLRKGL…QVVDYVRKQA (120 aa)) form a UBP-type zinc finger. 12 residues coordinate Zn(2+): cysteine 24, histidine 26, cysteine 48, cysteine 51, cysteine 73, cysteine 76, cysteine 81, histidine 89, histidine 93, histidine 102, cysteine 115, and cysteine 118. A Glycyl lysine isopeptide (Lys-Gly) (interchain with G-Cter in SUMO2) cross-link involves residue lysine 139. The segment at 145–184 (TSKPAEKNNGHIELENKKLEKESKNEQEREKSESMAKENI) is disordered. Positions 148–180 (PAEKNNGHIELENKKLEKESKNEQEREKSESMA) are enriched in basic and acidic residues. Residue serine 188 is modified to Phosphoserine. The region spanning 195-825 (KGLSNLGNTC…QAYLLFYERI (631 aa)) is the USP domain. The active-site Nucleophile is the cysteine 204. The segment covering 392 to 407 (QSGKKNINDKNVKKTM) has biased composition (basic and acidic residues). Disordered stretches follow at residues 392-456 (QSGK…RRQQ) and 526-553 (ADER…TSAP). Residues 408–419 (EEEDKDSEEEKD) are compositionally biased toward acidic residues. Serine 414 is modified (phosphoserine). Residues 436–456 (HTQKKAKKQAKKQAKNQRRQQ) show a composition bias toward basic residues. The span at 526–537 (ADERKCPEHPEV) shows a compositional bias: basic and acidic residues. Residues 539–551 (SVSTESDLGSLTS) show a composition bias toward polar residues. The Proton acceptor role is filled by histidine 760.

This sequence belongs to the peptidase C19 family. USP16 subfamily. As to quaternary structure, homotetramer. Associates with late pre-40S ribosomes. Interacts with CEP78; promoting deubiquitination of tektins. Post-translationally, phosphorylated at the onset of mitosis and dephosphorylated during the metaphase/anaphase transition. Phosphorylation by AURKB enhances the deubiquitinase activity.

Its subcellular location is the nucleus. The catalysed reaction is Thiol-dependent hydrolysis of ester, thioester, amide, peptide and isopeptide bonds formed by the C-terminal Gly of ubiquitin (a 76-residue protein attached to proteins as an intracellular targeting signal).. Its function is as follows. Specifically deubiquitinates 'Lys-120' of histone H2A (H2AK119Ub), a specific tag for epigenetic transcriptional repression, thereby acting as a coactivator. Deubiquitination of histone H2A is a prerequisite for subsequent phosphorylation at 'Ser-11' of histone H3 (H3S10ph), and is required for chromosome segregation when cells enter into mitosis. In resting B- and T-lymphocytes, phosphorylation by AURKB leads to enhance its activity, thereby maintaining transcription in resting lymphocytes. Regulates Hox gene expression via histone H2A deubiquitination. Prefers nucleosomal substrates. Does not deubiquitinate histone H2B. Also deubiquitinates non-histone proteins, such as ribosomal protein RPS27A: deubiquitination of monoubiquitinated RPS27A promotes maturation of the 40S ribosomal subunit. Also mediates deubiquitination of tektin proteins (TEKT1, TEKT2, TEK3, TEKT4 and TEKT5), promoting their stability. The polypeptide is Ubiquitin carboxyl-terminal hydrolase 16 (Usp16) (Rattus norvegicus (Rat)).